Reading from the N-terminus, the 170-residue chain is Plastocyanin, chloroplastic (170 aa).

A chloroplast-targeting transit peptide spans 1–71; it reads MATVTSAAVA…SAMLASNAMA (71 aa). Residues 72-170 form the Plastocyanin-like domain; it reads LEVLLGGDDG…AGMVGKVTVN (99 aa). Residues His-108, Cys-155, His-158, and Met-163 each contribute to the Cu cation site.

Belongs to the plastocyanin family. Requires Cu(2+) as cofactor.

Its subcellular location is the plastid. It localises to the chloroplast thylakoid membrane. Participates in electron transfer between P700 and the cytochrome b6-f complex in photosystem I. This chain is Plastocyanin, chloroplastic (PETE), found in Solanum lycopersicum (Tomato).